Consider the following 87-residue polypeptide: Small ribosomal subunit protein uS15 (87 aa).

Residues 1-19 show a composition bias toward basic and acidic residues; it reads MEKARKEQLIREYATHEGD. A disordered region spans residues 1–22; the sequence is MEKARKEQLIREYATHEGDTGS.

Belongs to the universal ribosomal protein uS15 family. In terms of assembly, part of the 30S ribosomal subunit. Forms a bridge to the 50S subunit in the 70S ribosome, contacting the 23S rRNA.

In terms of biological role, one of the primary rRNA binding proteins, it binds directly to 16S rRNA where it helps nucleate assembly of the platform of the 30S subunit by binding and bridging several RNA helices of the 16S rRNA. Its function is as follows. Forms an intersubunit bridge (bridge B4) with the 23S rRNA of the 50S subunit in the ribosome. The sequence is that of Small ribosomal subunit protein uS15 from Clostridium novyi (strain NT).